The chain runs to 501 residues: Beta-secretase 1 (501 aa).

A signal peptide spans 1 to 21; sequence MAQALPWLLLWMGAGVLPAHG. Residues 22–45 constitute a propeptide that is removed on maturation; the sequence is TQHGIRLPLRSGLGGAPLGLRLPR. The Extracellular segment spans residues 22–457; it reads TQHGIRLPLR…PQTDESTLMT (436 aa). The segment at 39-58 is disordered; it reads LGLRLPRETDEEPEEPGRRG. A Peptidase A1 domain is found at 75–416; it reads YYVEMTVGSP…DRARKRIGFA (342 aa). Asp-93 is a catalytic residue. Residue Lys-126 is modified to N6-acetyllysine. 3 N-linked (GlcNAc...) asparagine glycosylation sites follow: Asn-153, Asn-172, and Asn-223. Cystine bridges form between Cys-216–Cys-420, Cys-278–Cys-443, and Cys-330–Cys-380. Residues Lys-275, Lys-279, and Lys-285 each carry the N6-acetyllysine modification. Asp-289 is an active-site residue. Residues Lys-299, Lys-300, and Lys-307 each carry the N6-acetyllysine modification. Asn-354 carries N-linked (GlcNAc...) asparagine glycosylation. The helical transmembrane segment at 458 to 478 threads the bilayer; the sequence is IAYVMAAICALFMLPLCLMVC. 4 S-palmitoyl cysteine lipidation sites follow: Cys-474, Cys-478, Cys-482, and Cys-485. The Cytoplasmic segment spans residues 479 to 501; that stretch reads QWRCLRCLRQQHDDFADDISLLK. The interval 479–501 is interaction with RTN3; that stretch reads QWRCLRCLRQQHDDFADDISLLK. The DXXLL motif lies at 496 to 500; sequence DISLL. At Ser-498 the chain carries Phosphoserine. Residue Lys-501 forms a Glycyl lysine isopeptide (Lys-Gly) (interchain with G-Cter in ubiquitin) linkage.

This sequence belongs to the peptidase A1 family. As to quaternary structure, monomer. Interacts (via DXXLL motif) with GGA1, GGA2 and GGA3 (via their VHS domain); the interaction highly increases when BACE1 is phosphorylated at Ser-498. Interacts with RTN1; RTN2; RTN3 and RTN4; the interaction leads to inhibition of amyloid precursor protein processing. Interacts with SNX6. Interacts with PCSK9. Interacts with NAT8 and NAT8B. Interacts with BIN1. Interacts (via extracellular domain) with ADAM10 (via extracellular domain). Interacts with SORL1; this interaction may affect binding with APP and hence reduce APP cleavage. Interacts with NRDC AND NRG1. Post-translationally, N-Glycosylated. Addition of a bisecting N-acetylglucosamine by MGAT3 blocks lysosomal targeting, further degradation and is required for maintaining stability under stress conditions. In terms of processing, acetylated in the endoplasmic reticulum at Lys-126, Lys-275, Lys-279, Lys-285, Lys-299, Lys-300 and Lys-307. Acetylation by NAT8 and NAT8B is transient and deacetylation probably occurs in the Golgi. Acetylation regulates the maturation, the transport to the plasma membrane, the stability and the expression of the protein. Palmitoylation mediates lipid raft localization. Post-translationally, ubiquitinated at Lys-501, ubiquitination leads to lysosomal degradation. Monoubiquitinated and 'Lys-63'-linked polyubitinated. Deubiquitnated by USP8; inhibits lysosomal degradation. In terms of processing, phosphorylation at Ser-498 is required for interaction with GGA1 and retrograded transport from endosomal compartments to the trans-Golgi network. Non-phosphorylated BACE1 enters a direct recycling route to the cell surface. Expressed at high levels in the brain and pancreas. In the brain, expression is highest in the substantia nigra, locus coruleus and medulla oblongata.

It is found in the cell membrane. Its subcellular location is the golgi apparatus. It localises to the trans-Golgi network. The protein resides in the endoplasmic reticulum. The protein localises to the endosome. It is found in the cell surface. Its subcellular location is the cytoplasmic vesicle membrane. It localises to the membrane raft. The protein resides in the lysosome. The protein localises to the late endosome. It is found in the early endosome. Its subcellular location is the recycling endosome. It localises to the cell projection. The protein resides in the axon. The protein localises to the dendrite. It catalyses the reaction Broad endopeptidase specificity. Cleaves Glu-Val-Asn-Leu-|-Asp-Ala-Glu-Phe in the Swedish variant of Alzheimer's amyloid precursor protein.. With respect to regulation, inhibited by RTN3 and RTN4. In terms of biological role, responsible for the proteolytic processing of the amyloid precursor protein (APP). Cleaves at the N-terminus of the A-beta peptide sequence, between residues 671 and 672 of APP, leads to the generation and extracellular release of beta-cleaved soluble APP, and a corresponding cell-associated C-terminal fragment which is later released by gamma-secretase. Cleaves CHL1. The polypeptide is Beta-secretase 1 (Homo sapiens (Human)).